The sequence spans 235 residues: Ribosomal RNA large subunit methyltransferase E (235 aa).

Residues G76, W78, D99, D115, and D139 each contribute to the S-adenosyl-L-methionine site. K179 functions as the Proton acceptor in the catalytic mechanism.

Belongs to the class I-like SAM-binding methyltransferase superfamily. RNA methyltransferase RlmE family.

It is found in the cytoplasm. It carries out the reaction uridine(2552) in 23S rRNA + S-adenosyl-L-methionine = 2'-O-methyluridine(2552) in 23S rRNA + S-adenosyl-L-homocysteine + H(+). In terms of biological role, specifically methylates the uridine in position 2552 of 23S rRNA at the 2'-O position of the ribose in the fully assembled 50S ribosomal subunit. The protein is Ribosomal RNA large subunit methyltransferase E of Rhodopseudomonas palustris (strain BisA53).